Consider the following 253-residue polypeptide: Small ribosomal subunit protein uS2 (253 aa).

Belongs to the universal ribosomal protein uS2 family.

The chain is Small ribosomal subunit protein uS2 from Chlorobium luteolum (strain DSM 273 / BCRC 81028 / 2530) (Pelodictyon luteolum).